The chain runs to 147 residues: MKIVLQRVSQASVTIEGSIHGQIEQGLLLLVGVGPDDSQEDLDYAVRKIVNMRIFSDEAGKMNKSVQDVAGKILSISQFTLFADTKKGNRPAFTGAAAPALASQLYDAFNQALSAFVPVEVGVFGADMAVSLVNDGPVTIVLDTKNK.

The short motif at 136 to 137 (GP) is the Gly-cisPro motif, important for rejection of L-amino acids element.

It belongs to the DTD family. As to quaternary structure, homodimer.

The protein resides in the cytoplasm. It catalyses the reaction glycyl-tRNA(Ala) + H2O = tRNA(Ala) + glycine + H(+). It carries out the reaction a D-aminoacyl-tRNA + H2O = a tRNA + a D-alpha-amino acid + H(+). Its function is as follows. An aminoacyl-tRNA editing enzyme that deacylates mischarged D-aminoacyl-tRNAs. Also deacylates mischarged glycyl-tRNA(Ala), protecting cells against glycine mischarging by AlaRS. Acts via tRNA-based rather than protein-based catalysis; rejects L-amino acids rather than detecting D-amino acids in the active site. By recycling D-aminoacyl-tRNA to D-amino acids and free tRNA molecules, this enzyme counteracts the toxicity associated with the formation of D-aminoacyl-tRNA entities in vivo and helps enforce protein L-homochirality. This Streptococcus suis (strain 98HAH33) protein is D-aminoacyl-tRNA deacylase.